The sequence spans 236 residues: Small ribosomal subunit protein uS5 (236 aa).

The S5 DRBM domain maps to 61 to 124; that stretch reads ENQEVLDIAL…NYAKLNIIEI (64 aa).

Belongs to the universal ribosomal protein uS5 family. Part of the 30S ribosomal subunit. Contacts protein S4.

With S4 and S12 plays an important role in translational accuracy. This is Small ribosomal subunit protein uS5 from Pyrococcus furiosus (strain ATCC 43587 / DSM 3638 / JCM 8422 / Vc1).